A 380-amino-acid chain; its full sequence is Glycerate kinase (380 aa).

It belongs to the glycerate kinase type-1 family.

It catalyses the reaction (R)-glycerate + ATP = (2R)-3-phosphoglycerate + ADP + H(+). The polypeptide is Glycerate kinase (glxK) (Halalkalibacterium halodurans (strain ATCC BAA-125 / DSM 18197 / FERM 7344 / JCM 9153 / C-125) (Bacillus halodurans)).